Reading from the N-terminus, the 315-residue chain is Porphobilinogen deaminase (315 aa).

Cys-245 carries the S-(dipyrrolylmethanemethyl)cysteine modification.

Belongs to the HMBS family. As to quaternary structure, monomer. Dipyrromethane is required as a cofactor.

It carries out the reaction 4 porphobilinogen + H2O = hydroxymethylbilane + 4 NH4(+). The protein operates within porphyrin-containing compound metabolism; protoporphyrin-IX biosynthesis; coproporphyrinogen-III from 5-aminolevulinate: step 2/4. It participates in porphyrin-containing compound metabolism; chlorophyll biosynthesis. In terms of biological role, tetrapolymerization of the monopyrrole PBG into the hydroxymethylbilane pre-uroporphyrinogen in several discrete steps. In Prochlorococcus marinus (strain NATL1A), this protein is Porphobilinogen deaminase.